The following is an 85-amino-acid chain: Probable small nuclear ribonucleoprotein G (85 aa).

The 73-residue stretch at 6–78 (QADPDLTKLL…ILLMEPLESM (73 aa)) folds into the Sm domain.

Belongs to the snRNP Sm proteins family. In terms of assembly, core component of the spliceosomal U1, U2, U4 and U5 small nuclear ribonucleoproteins (snRNPs), the building blocks of the spliceosome. Most spliceosomal snRNPs contain a common set of Sm proteins, SNRPB, SNRPD1, SNRPD2, SNRPD3, SNRPE, SNRPF and SNRPG that assemble in a heptameric protein ring on the Sm site of the small nuclear RNA to form the core snRNP. Component of the U1 snRNP. Component of the U4/U6-U5 tri-snRNP complex. Component of the U7 snRNP complex. Component of the U11/U12 snRNPs that are part of the U12-type spliceosome.

It localises to the cytoplasm. It is found in the cytosol. Its subcellular location is the nucleus. In terms of biological role, plays a role in pre-mRNA splicing as a core component of the spliceosomal U1, U2, U4 and U5 small nuclear ribonucleoproteins (snRNPs), the building blocks of the spliceosome. Component of both the pre-catalytic spliceosome B complex and activated spliceosome C complexes. Is also a component of the minor U12 spliceosome. In Dictyostelium discoideum (Social amoeba), this protein is Probable small nuclear ribonucleoprotein G (snrpG).